Here is a 346-residue protein sequence, read N- to C-terminus: NADH-ubiquinone oxidoreductase chain 2 (346 aa).

A run of 10 helical transmembrane segments spans residues 25 to 45, 56 to 76, 94 to 114, 122 to 142, 148 to 168, 178 to 198, 200 to 220, 240 to 260, 278 to 298, and 325 to 345; these read NLLL…PLLA, ATKY…VIIL, LLNM…FHYW, IPLH…LSIL, LLNP…GAWG, IMAY…PYNP, LTLL…ITLM, ILTM…LTGF, LSTL…RLIY, and FILP…SQLI.

Belongs to the complex I subunit 2 family. Core subunit of respiratory chain NADH dehydrogenase (Complex I) which is composed of 45 different subunits. Interacts with TMEM242.

Its subcellular location is the mitochondrion inner membrane. It carries out the reaction a ubiquinone + NADH + 5 H(+)(in) = a ubiquinol + NAD(+) + 4 H(+)(out). Core subunit of the mitochondrial membrane respiratory chain NADH dehydrogenase (Complex I) which catalyzes electron transfer from NADH through the respiratory chain, using ubiquinone as an electron acceptor. Essential for the catalytic activity and assembly of complex I. The protein is NADH-ubiquinone oxidoreductase chain 2 of Rattus norvegicus (Rat).